The following is a 222-amino-acid chain: Ras-related protein Rab11C (222 aa).

22–29 (GDSAVGKT) lines the GTP pocket. The Effector region motif lies at 44-52 (SKATIGVEF). GTP is bound by residues 70-74 (DTAGQ) and 128-131 (NKTD). Residues C219 and C220 are each lipidated (S-geranylgeranyl cysteine).

Belongs to the small GTPase superfamily. Rab family.

The protein localises to the cell membrane. In Nicotiana tabacum (Common tobacco), this protein is Ras-related protein Rab11C (RAB11C).